Reading from the N-terminus, the 347-residue chain is Metacaspase-2 (347 aa).

A propeptide spanning residues 1 to 55 is cleaved from the precursor; sequence MCSLITQLCDAGQLADYVGLGWLNAVSSQPYLVQALGLQPPPRRVDVDAAFRDAK. The tract at residues 1–70 is regulates substrate access to the active site; the sequence is MCSLITQLCD…QPWVATPLPG (70 aa). His158 is a catalytic residue. 3 residues coordinate Ca(2+): Asp173, Asp189, and Asp190. The active site involves Cys213. Asp220 lines the Ca(2+) pocket.

This sequence belongs to the peptidase C14B family. Monomer. Auto-proteolytic cleavage of the propeptide after Lys-55 and between the large and small subunits after Lys-268 is required for catalytic activity towards large protein substrates but is dispensable towards small oligopeptide substrates. After processing, the propeptide and the large and small subunits remain associated by non-covalent bonds. In vivo, the unprocessed enzyme appears to be the predominant form.

The protein localises to the recycling endosome. With respect to regulation, activated by Ca(2+). In response to calcium binding, the 280-loop, a disordered loop consisting of residues 269-275, undergoes a conformational change which stabilizes substrates in the active site. The binding to the substrate triggers the release of the N-terminal region resulting in the activation of the enzyme. Proteolytic cleavage is required for catalytic activity towards large protein substrates. Functionally, cysteine protease that cleaves specifically after arginine or lysine residues. In Trypanosoma brucei brucei (strain 927/4 GUTat10.1), this protein is Metacaspase-2.